The primary structure comprises 265 residues: Orotidine 5'-phosphate decarboxylase (265 aa).

Residues Asp38, 60 to 62 (KTH), 92 to 101 (DRKFADIGKT), Tyr218, and Arg236 each bind substrate. The Proton donor role is filled by Lys94.

This sequence belongs to the OMP decarboxylase family.

It carries out the reaction orotidine 5'-phosphate + H(+) = UMP + CO2. It participates in pyrimidine metabolism; UMP biosynthesis via de novo pathway; UMP from orotate: step 2/2. The protein is Orotidine 5'-phosphate decarboxylase (URA3) of Cyberlindnera fabianii (Yeast).